The primary structure comprises 236 residues: UPF0502 protein BceJ2315_62050 (236 aa).

This sequence belongs to the UPF0502 family.

This is UPF0502 protein BceJ2315_62050 from Burkholderia cenocepacia (strain ATCC BAA-245 / DSM 16553 / LMG 16656 / NCTC 13227 / J2315 / CF5610) (Burkholderia cepacia (strain J2315)).